The sequence spans 684 residues: UvrABC system protein B (684 aa).

A Helicase ATP-binding domain is found at 32-420; it reads DGVLRGDRWQ…GGVVVEQLIR (389 aa). ATP is bound at residue 45–52; that stretch reads GVTGSGKT. The Beta-hairpin signature appears at 98 to 121; sequence YYDFYQPEAYIPSLDKYIAKDLKI. A Helicase C-terminal domain is found at 437–603; the sequence is QIDHLLARIR…SIIKSVDQVL (167 aa). A UVR domain is found at 643-678; sequence MLMVAEMNAEMQKAAEQTDYEKAAYLRDEILMLQER.

This sequence belongs to the UvrB family. As to quaternary structure, forms a heterotetramer with UvrA during the search for lesions. Interacts with UvrC in an incision complex.

It is found in the cytoplasm. Its function is as follows. The UvrABC repair system catalyzes the recognition and processing of DNA lesions. A damage recognition complex composed of 2 UvrA and 2 UvrB subunits scans DNA for abnormalities. Upon binding of the UvrA(2)B(2) complex to a putative damaged site, the DNA wraps around one UvrB monomer. DNA wrap is dependent on ATP binding by UvrB and probably causes local melting of the DNA helix, facilitating insertion of UvrB beta-hairpin between the DNA strands. Then UvrB probes one DNA strand for the presence of a lesion. If a lesion is found the UvrA subunits dissociate and the UvrB-DNA preincision complex is formed. This complex is subsequently bound by UvrC and the second UvrB is released. If no lesion is found, the DNA wraps around the other UvrB subunit that will check the other stand for damage. The protein is UvrABC system protein B of Chlorobaculum tepidum (strain ATCC 49652 / DSM 12025 / NBRC 103806 / TLS) (Chlorobium tepidum).